A 103-amino-acid polypeptide reads, in one-letter code: Small ribosomal subunit protein uS10 (103 aa).

The protein belongs to the universal ribosomal protein uS10 family. As to quaternary structure, part of the 30S ribosomal subunit.

Functionally, involved in the binding of tRNA to the ribosomes. The chain is Small ribosomal subunit protein uS10 from Sphingopyxis alaskensis (strain DSM 13593 / LMG 18877 / RB2256) (Sphingomonas alaskensis).